Reading from the N-terminus, the 358-residue chain is PqqA peptide cyclase (358 aa).

Residues 4-219 (PSPPMSLLAE…VEAERAKGGL (216 aa)) enclose the Radical SAM core domain. The [4Fe-4S] cluster site is built by C18, C22, and C25.

The protein belongs to the radical SAM superfamily. PqqE family. As to quaternary structure, interacts with PqqD. The interaction is necessary for activity of PqqE. The cofactor is [4Fe-4S] cluster.

The catalysed reaction is [PQQ precursor protein] + S-adenosyl-L-methionine = E-Y cross-linked-[PQQ precursor protein] + 5'-deoxyadenosine + L-methionine + H(+). The protein operates within cofactor biosynthesis; pyrroloquinoline quinone biosynthesis. Functionally, catalyzes the cross-linking of a glutamate residue and a tyrosine residue in the PqqA protein as part of the biosynthesis of pyrroloquinoline quinone (PQQ). The chain is PqqA peptide cyclase from Gluconobacter oxydans (strain 621H) (Gluconobacter suboxydans).